The primary structure comprises 400 residues: Nicotinate phosphoribosyltransferase (400 aa).

A Phosphohistidine; by autocatalysis modification is found at His220.

This sequence belongs to the NAPRTase family. In terms of processing, transiently phosphorylated on a His residue during the reaction cycle. Phosphorylation strongly increases the affinity for substrates and increases the rate of nicotinate D-ribonucleotide production. Dephosphorylation regenerates the low-affinity form of the enzyme, leading to product release.

It catalyses the reaction nicotinate + 5-phospho-alpha-D-ribose 1-diphosphate + ATP + H2O = nicotinate beta-D-ribonucleotide + ADP + phosphate + diphosphate. It functions in the pathway cofactor biosynthesis; NAD(+) biosynthesis; nicotinate D-ribonucleotide from nicotinate: step 1/1. Catalyzes the synthesis of beta-nicotinate D-ribonucleotide from nicotinate and 5-phospho-D-ribose 1-phosphate at the expense of ATP. The sequence is that of Nicotinate phosphoribosyltransferase from Salmonella typhi.